The chain runs to 239 residues: Large ribosomal subunit protein uL1 (239 aa).

This sequence belongs to the universal ribosomal protein uL1 family. As to quaternary structure, part of the 50S ribosomal subunit.

Its function is as follows. Binds directly to 23S rRNA. The L1 stalk is quite mobile in the ribosome, and is involved in E site tRNA release. Protein L1 is also a translational repressor protein, it controls the translation of the L11 operon by binding to its mRNA. The sequence is that of Large ribosomal subunit protein uL1 from Rickettsia bellii (strain OSU 85-389).